A 155-amino-acid polypeptide reads, in one-letter code: Molybdopterin synthase catalytic subunit (155 aa).

Substrate is bound by residues histidine 109 to arginine 110, lysine 125, and lysine 132 to glutamate 134.

Belongs to the MoaE family. MOCS2B subfamily. Heterotetramer; composed of 2 small (MOCS2A) and 2 large (MOCS2B) subunits.

The protein localises to the cytoplasm. It is found in the cytosol. The catalysed reaction is 2 [molybdopterin-synthase sulfur-carrier protein]-C-terminal-Gly-aminoethanethioate + cyclic pyranopterin phosphate + H2O = molybdopterin + 2 [molybdopterin-synthase sulfur-carrier protein]-C-terminal Gly-Gly + 2 H(+). Its pathway is cofactor biosynthesis; molybdopterin biosynthesis. Its function is as follows. Catalytic subunit of the molybdopterin synthase complex, a complex that catalyzes the conversion of precursor Z into molybdopterin. Acts by mediating the incorporation of 2 sulfur atoms from thiocarboxylated MOCS2A into precursor Z to generate a dithiolene group. The polypeptide is Molybdopterin synthase catalytic subunit (Taeniopygia guttata (Zebra finch)).